Here is a 269-residue protein sequence, read N- to C-terminus: Tryptophan synthase alpha chain (269 aa).

Residues Glu-49 and Asp-60 each act as proton acceptor in the active site.

The protein belongs to the TrpA family. As to quaternary structure, tetramer of two alpha and two beta chains.

It catalyses the reaction (1S,2R)-1-C-(indol-3-yl)glycerol 3-phosphate + L-serine = D-glyceraldehyde 3-phosphate + L-tryptophan + H2O. Its pathway is amino-acid biosynthesis; L-tryptophan biosynthesis; L-tryptophan from chorismate: step 5/5. Functionally, the alpha subunit is responsible for the aldol cleavage of indoleglycerol phosphate to indole and glyceraldehyde 3-phosphate. The chain is Tryptophan synthase alpha chain from Actinobacillus pleuropneumoniae serotype 3 (strain JL03).